Consider the following 152-residue polypeptide: SUZ RNA-binding domain-containing (152 aa).

N-acetylmethionine is present on M1. The interval 30-152 (TQKESRKSKS…DGSQGFKQRR (123 aa)) is disordered. Residues S37, S39, and S51 each carry the phosphoserine modification. Residues 42–107 (KVPIVIQDDS…ARRRILGSAS (66 aa)) enclose the SUZ domain. Positions 66 to 80 (PTSNGVVSSPNSTSR) are enriched in polar residues. The span at 89–100 (AQREAEYAEARR) shows a compositional bias: basic and acidic residues. Phosphoserine occurs at positions 105 and 107. One can recognise an SUZ-C domain in the interval 111–152 (EQEKPILDRPTRISQPEDSRQPSNVIRQPLGPDGSQGFKQRR). Residues 113-130 (EKPILDRPTRISQPEDSR) are compositionally biased toward basic and acidic residues.

The protein belongs to the SZRD1 family.

This is SUZ RNA-binding domain-containing (Szrd1) from Mus musculus (Mouse).